The primary structure comprises 341 residues: KH domain-containing RNA-binding protein QKI (341 aa).

The tract at residues 11–82 is qua1 domain; involved in homodimerization; that stretch reads PNPTPDYLMQ…PDAVGPIVQL (72 aa). The region spanning 87–153 is the KH domain; the sequence is YVPVKEYPDF…WEHLNEDLHV (67 aa). Positions 182–213 are qua2 domain; involved in RNA binding; the sequence is AAEGEDSLKKMQLMELAILNGTYRDANIKSPA. Ser-188 bears the Phosphoserine mark. Arg-227 bears the Omega-N-methylarginine mark. Asymmetric dimethylarginine; by CARM1; alternate is present on Arg-242. Arg-242 bears the Omega-N-methylarginine; alternate mark. Arg-256 carries the post-translational modification Omega-N-methylarginine. The short motif at 276–279 is the SH3-binding element; it reads PPGP. A Nuclear localization signal motif is present at residues 324–330; that stretch reads RVHPYQR.

The protein belongs to the quaking family. In terms of assembly, homodimer; does not require RNA to homodimerize. Able to heterodimerize with BICC1. In terms of processing, methylated by PRMT1. Post-translationally, tyrosine phosphorylated at its C-terminus, probably by FYN. Phosphorylation leads to decreased mRNA-binding affinity, affecting transport and/or stabilization of MBP mRNA. Ubiquitinated by RNF6 in macrophages, leading to its degradation. Present in myelinating oligodendrocytes (at protein level).

The protein localises to the nucleus. The protein resides in the cytoplasm. Its function is as follows. RNA reader protein, which recognizes and binds specific RNAs, thereby regulating RNA metabolic processes, such as pre-mRNA splicing, circular RNA (circRNA) formation, mRNA export, mRNA stability and/or translation. Involved in various cellular processes, such as mRNA storage into stress granules, apoptosis, lipid deposition, interferon response, glial cell fate and development. Binds to the 5'-NACUAAY-N(1,20)-UAAY-3' RNA core sequence. Acts as a mRNA modification reader that specifically recognizes and binds mRNA transcripts modified by internal N(7)-methylguanine (m7G). Promotes the formation of circular RNAs (circRNAs) during the epithelial to mesenchymal transition and in cardiomyocytes: acts by binding to sites flanking circRNA-forming exons. CircRNAs are produced by back-splicing circularization of pre-mRNAs. Plays a central role in myelinization via 3 distinct mechanisms. First, acts by protecting and promoting stability of target mRNAs such as MBP, SIRT2 and CDKN1B, which promotes oligodendrocyte differentiation. Second, participates in mRNA transport by regulating the nuclear export of MBP mRNA. Finally, indirectly regulates mRNA splicing of MAG pre-mRNA during oligodendrocyte differentiation by acting as a negative regulator of MAG exon 12 alternative splicing: acts by binding to HNRNPA1 mRNA splicing factor, preventing its translation. Involved in microglia differentiation and remyelination by regulating microexon alternative splicing of the Rho GTPase pathway. Involved in macrophage differentiation: promotes monocyte differentiation by regulating pre-mRNA splicing in naive peripheral blood monocytes. Acts as an important regulator of muscle development: required for the contractile function of cardiomyocytes by regulating alternative splicing of cardiomyocyte transcripts. Acts as a negative regulator of thermogenesis by decreasing stability, nuclear export and translation of mRNAs encoding PPARGC1A and UCP1. Also required for visceral endoderm function and blood vessel development. May also play a role in smooth muscle development. In addition to its RNA-binding activity, also acts as a nuclear transcription coactivator for SREBF2/SREBP2. The sequence is that of KH domain-containing RNA-binding protein QKI from Rattus norvegicus (Rat).